The sequence spans 380 residues: Anhydro-N-acetylmuramic acid kinase (380 aa).

ATP is bound at residue 9 to 16; it reads GTSADGVD.

The protein belongs to the anhydro-N-acetylmuramic acid kinase family.

It carries out the reaction 1,6-anhydro-N-acetyl-beta-muramate + ATP + H2O = N-acetyl-D-muramate 6-phosphate + ADP + H(+). Its pathway is amino-sugar metabolism; 1,6-anhydro-N-acetylmuramate degradation. It participates in cell wall biogenesis; peptidoglycan recycling. Functionally, catalyzes the specific phosphorylation of 1,6-anhydro-N-acetylmuramic acid (anhMurNAc) with the simultaneous cleavage of the 1,6-anhydro ring, generating MurNAc-6-P. Is required for the utilization of anhMurNAc either imported from the medium or derived from its own cell wall murein, and thus plays a role in cell wall recycling. In Synechococcus sp. (strain CC9902), this protein is Anhydro-N-acetylmuramic acid kinase.